The following is a 107-amino-acid chain: UPF0473 protein LACR_0139 (107 aa).

The protein belongs to the UPF0473 family.

This chain is UPF0473 protein LACR_0139, found in Lactococcus lactis subsp. cremoris (strain SK11).